The sequence spans 181 residues: Squamosa promoter-binding-like protein 5 (181 aa).

The segment covering 1-10 (MEGQRTQRRG) has biased composition (basic residues). The interval 1 to 58 (MEGQRTQRRGYLKDKATVSNLVEEEMENGMDGEEEDGGDEDKRKKVMERVRGPSTDRV) is disordered. Positions 22 to 39 (VEEEMENGMDGEEEDGGD) are enriched in acidic residues. Over residues 40–51 (EDKRKKVMERVR) the composition is skewed to basic and acidic residues. Residues 60–137 (SRLCQVDRCT…AGHNERRRKI (78 aa)) form an SBP-type zinc finger. 8 residues coordinate Zn(2+): C63, C68, C85, H88, C104, C107, H111, and C123. The short motif at 120-136 (KRSCRRRLAGHNERRRK) is the Bipartite nuclear localization signal element. Positions 128-181 (AGHNERRRKISGDSFGEGSGRRGFSGQLIQTQERNRVDRKLPMTNSSFKRPQIR) are disordered. The segment covering 170–181 (MTNSSFKRPQIR) has biased composition (polar residues).

Zn(2+) serves as cofactor. Expressed in the inflorescence apical meristem and young flowers.

It is found in the nucleus. The protein localises to the cytoplasm. Trans-acting factor that binds specifically to the consensus nucleotide sequence 5'-TNCGTACAA-3' of AP1 promoter. Promotes both vegetative phase change and flowering. This Arabidopsis thaliana (Mouse-ear cress) protein is Squamosa promoter-binding-like protein 5 (SPL5).